The primary structure comprises 776 residues: DNA ligase (776 aa).

NAD(+)-binding positions include 31 to 35 (DAEYD) and 80 to 81 (SL). Residue Lys114 is the N6-AMP-lysine intermediate of the active site. Arg135, Glu172, Lys288, and Lys312 together coordinate NAD(+). The Zn(2+) site is built by Cys406, Cys409, Cys436, and Cys442. One can recognise a BRCT domain in the interval 693-776 (AEGLPLAGQT…TFLAEQGIVV (84 aa)).

It belongs to the NAD-dependent DNA ligase family. LigA subfamily. It depends on Mg(2+) as a cofactor. Requires Mn(2+) as cofactor.

The catalysed reaction is NAD(+) + (deoxyribonucleotide)n-3'-hydroxyl + 5'-phospho-(deoxyribonucleotide)m = (deoxyribonucleotide)n+m + AMP + beta-nicotinamide D-nucleotide.. In terms of biological role, DNA ligase that catalyzes the formation of phosphodiester linkages between 5'-phosphoryl and 3'-hydroxyl groups in double-stranded DNA using NAD as a coenzyme and as the energy source for the reaction. It is essential for DNA replication and repair of damaged DNA. The polypeptide is DNA ligase (Pseudomonas putida (strain GB-1)).